Here is a 74-residue protein sequence, read N- to C-terminus: MVSKSLIVLLLVSVLVSTFFTTEAYPASYDGDFDALDDLDDLDLDDLLDLEPADLVLLDMWANMLDSQDFEDFE.

The N-terminal stretch at 1 to 24 (MVSKSLIVLLLVSVLVSTFFTTEA) is a signal peptide.

It belongs to the non-disulfide-bridged peptide (NDBP) superfamily. Long chain multifunctional peptide (group 2) family. Expressed by the venom gland.

It is found in the secreted. May be an antimicrobial peptide. In Tityus costatus (Brazilian scorpion), this protein is Anionic peptide clone 10.